Consider the following 112-residue polypeptide: uncharacterized protein (112 aa).

3 helical membrane passes run 33 to 53 (PSPL…PFGA), 58 to 78 (LYIY…NVCT), and 91 to 111 (CVYV…LLFV).

The protein localises to the membrane. This is an uncharacterized protein from Saccharomyces cerevisiae (strain ATCC 204508 / S288c) (Baker's yeast).